Reading from the N-terminus, the 393-residue chain is NAD(P)H-quinone oxidoreductase subunit H, chloroplastic (393 aa).

It belongs to the complex I 49 kDa subunit family. NDH is composed of at least 16 different subunits, 5 of which are encoded in the nucleus.

It localises to the plastid. Its subcellular location is the chloroplast thylakoid membrane. It carries out the reaction a plastoquinone + NADH + (n+1) H(+)(in) = a plastoquinol + NAD(+) + n H(+)(out). The enzyme catalyses a plastoquinone + NADPH + (n+1) H(+)(in) = a plastoquinol + NADP(+) + n H(+)(out). NDH shuttles electrons from NAD(P)H:plastoquinone, via FMN and iron-sulfur (Fe-S) centers, to quinones in the photosynthetic chain and possibly in a chloroplast respiratory chain. The immediate electron acceptor for the enzyme in this species is believed to be plastoquinone. Couples the redox reaction to proton translocation, and thus conserves the redox energy in a proton gradient. In Brachypodium distachyon (Purple false brome), this protein is NAD(P)H-quinone oxidoreductase subunit H, chloroplastic.